Reading from the N-terminus, the 212-residue chain is Guanylate kinase (212 aa).

The region spanning 5–187 is the Guanylate kinase-like domain; that stretch reads GILCIISAPS…ALMHLQSIML (183 aa). 12 to 19 lines the ATP pocket; sequence APSGTGKS.

The protein belongs to the guanylate kinase family.

The protein resides in the cytoplasm. The enzyme catalyses GMP + ATP = GDP + ADP. Its function is as follows. Essential for recycling GMP and indirectly, cGMP. This chain is Guanylate kinase, found in Blochmanniella pennsylvanica (strain BPEN).